Reading from the N-terminus, the 31-residue chain is Chymotrypsin (31 aa).

Positions 1–31 constitute a Peptidase S1 domain; sequence IVGGVEAVPGVWPYQAALFIIDMYFCGGSLI.

This sequence belongs to the peptidase S1 family.

The protein resides in the secreted. It localises to the extracellular space. The enzyme catalyses Preferential cleavage: Tyr-|-Xaa, Trp-|-Xaa, Phe-|-Xaa, Leu-|-Xaa.. This chain is Chymotrypsin, found in Penaeus monodon (Giant tiger prawn).